Reading from the N-terminus, the 341-residue chain is GTP 3',8-cyclase (341 aa).

The region spanning 11 to 231 (KRNRPLRDLR…DLINKHMPVE (221 aa)) is the Radical SAM core domain. GTP is bound at residue R20. Residues C27 and C31 each contribute to the [4Fe-4S] cluster site. Residue Y33 participates in S-adenosyl-L-methionine binding. C34 contacts [4Fe-4S] cluster. A GTP-binding site is contributed by R75. G79 is an S-adenosyl-L-methionine binding site. Position 106 (T106) interacts with GTP. Residue S130 participates in S-adenosyl-L-methionine binding. K167 provides a ligand contact to GTP. M201 is an S-adenosyl-L-methionine binding site. Residues C265 and C268 each contribute to the [4Fe-4S] cluster site. 270–272 (RAR) contributes to the GTP binding site. Residue C282 coordinates [4Fe-4S] cluster.

Belongs to the radical SAM superfamily. MoaA family. As to quaternary structure, monomer and homodimer. It depends on [4Fe-4S] cluster as a cofactor.

The catalysed reaction is GTP + AH2 + S-adenosyl-L-methionine = (8S)-3',8-cyclo-7,8-dihydroguanosine 5'-triphosphate + 5'-deoxyadenosine + L-methionine + A + H(+). The protein operates within cofactor biosynthesis; molybdopterin biosynthesis. In terms of biological role, catalyzes the cyclization of GTP to (8S)-3',8-cyclo-7,8-dihydroguanosine 5'-triphosphate. Required for both nitrate assimilation and respiration. The protein is GTP 3',8-cyclase of Bacillus subtilis (strain 168).